The following is a 112-amino-acid chain: uncharacterized protein (112 aa).

This is an uncharacterized protein from Dictyostelium discoideum (Social amoeba).